The following is a 290-amino-acid chain: Small ribosomal subunit biogenesis GTPase RsgA (290 aa).

Residues 62 to 213 enclose the CP-type G domain; that stretch reads KNSLVRPPIV…IADTPGFSSL (152 aa). GTP-binding positions include 111 to 114 and 156 to 164; these read SKTD and GQTGVGKTT. The Zn(2+) site is built by Cys237, Cys242, His244, and Cys250.

This sequence belongs to the TRAFAC class YlqF/YawG GTPase family. RsgA subfamily. As to quaternary structure, monomer. Associates with 30S ribosomal subunit, binds 16S rRNA. It depends on Zn(2+) as a cofactor.

The protein localises to the cytoplasm. One of several proteins that assist in the late maturation steps of the functional core of the 30S ribosomal subunit. Helps release RbfA from mature subunits. May play a role in the assembly of ribosomal proteins into the subunit. Circularly permuted GTPase that catalyzes slow GTP hydrolysis, GTPase activity is stimulated by the 30S ribosomal subunit. This Streptococcus mutans serotype c (strain ATCC 700610 / UA159) protein is Small ribosomal subunit biogenesis GTPase RsgA.